A 754-amino-acid polypeptide reads, in one-letter code: 84 kDa readthrough protein (754 aa).

2 disordered regions span residues 103–131 and 713–740; these read RGEG…QGQT and KNTR…KSGV. The span at 713-730 shows a compositional bias: polar residues; it reads KNTRMYPSTSGQSYNSYK.

Belongs to the virgaviridae capsid protein family.

It localises to the virion. Its function is as follows. Minor capsid protein involved in virus transmission by the vector. This is 84 kDa readthrough protein (CP-CP2) from Soil-borne wheat mosaic virus (strain United States/Nebraska/1981) (SBWMV).